We begin with the raw amino-acid sequence, 189 residues long: Imidazoleglycerol-phosphate dehydratase (189 aa).

This sequence belongs to the imidazoleglycerol-phosphate dehydratase family.

Its subcellular location is the cytoplasm. The catalysed reaction is D-erythro-1-(imidazol-4-yl)glycerol 3-phosphate = 3-(imidazol-4-yl)-2-oxopropyl phosphate + H2O. Its pathway is amino-acid biosynthesis; L-histidine biosynthesis; L-histidine from 5-phospho-alpha-D-ribose 1-diphosphate: step 6/9. This is Imidazoleglycerol-phosphate dehydratase from Nautilia profundicola (strain ATCC BAA-1463 / DSM 18972 / AmH).